The following is a 1496-amino-acid chain: Synaptojanin-2 (1496 aa).

Residues 120–444 form the SAC domain; it reads LKKILSSGVF…GHGLSKVFTG (325 aa). The region spanning 906–985 is the RRM domain; that stretch reads DATVIVNLQS…RAVKIRPKTK (80 aa). 6 disordered regions span residues 1047–1083, 1100–1149, 1205–1357, 1393–1413, 1442–1461, and 1468–1496; these read VVSD…HPTY, GNFR…GTHG, VPES…LQVL, SSAI…AASF, EPLD…SAQV, and RGLP…TLGV. Residues 1063–1074 show a composition bias toward low complexity; it reads SASTPASKSPAL. Positions 1116–1130 are enriched in pro residues; that stretch reads RPRPPHPPQRPPPPT. The residue at position 1139 (S1139) is a Phosphoserine. Residues 1139 to 1149 are compositionally biased toward polar residues; sequence SDASISSGTHG. Composition is skewed to pro residues over residues 1230-1239 and 1279-1292; these read PVLPRRPVPR and TPPP…PVPK. The segment covering 1324–1338 has biased composition (low complexity); the sequence is ELSSPEAPEAPSLAP. Basic and acidic residues-rich tracts occupy residues 1470–1480 and 1487–1496; these read LPPDHGGKDFS and NKDKRTTLGV.

It belongs to the synaptojanin family. This sequence in the central section; belongs to the inositol 1,4,5-trisphosphate 5-phosphatase family. In terms of assembly, binds to GRB2. Isoform 2A binds to SYNJ2BP/OMP25. Widely expressed. Isoforms 2B1 and 2B2 are concentrated at nerve terminals in brain and at spermatid manchette in testis.

It is found in the cytoplasm. It localises to the cell membrane. The protein resides in the presynapse. The protein localises to the cytoskeleton. Its subcellular location is the membrane raft. It is found in the mitochondrion. It carries out the reaction a 1,2-diacyl-sn-glycero-3-phospho-(1D-myo-inositol-4,5-bisphosphate) + H2O = a 1,2-diacyl-sn-glycero-3-phospho-(1D-myo-inositol 4-phosphate) + phosphate. In terms of biological role, inositol 5-phosphatase which may be involved in distinct membrane trafficking and signal transduction pathways. May mediate the inhibitory effect of Rac1 on endocytosis. This is Synaptojanin-2 (Synj2) from Rattus norvegicus (Rat).